A 512-amino-acid chain; its full sequence is Glucagon-like peptide 2 receptor (512 aa).

Residues 1 to 135 (MRRLWGPGTP…KQNVDHYHHT (135 aa)) are Extracellular-facing. Disulfide bonds link cysteine 43–cysteine 65, cysteine 56–cysteine 97, and cysteine 78–cysteine 119. Residue asparagine 73 is glycosylated (N-linked (GlcNAc...) asparagine). Residues 136–160 (LLSTLQLMYTVGYSLSLISLFLALT) traverse the membrane as a helical segment. Residues 161–172 (LFLFLRKLHCTR) lie on the Cytoplasmic side of the membrane. The helical transmembrane segment at 173–197 (NYIHMNLFASFILRALVVLVKDMVF) threads the bilayer. Residues 198–223 (YNSYSRRPDSESGWMSYLSEISASCR) are Extracellular-facing. A helical transmembrane segment spans residues 224-247 (SVQVLLHYFVGTNHLWLLVEGLYL). Residues 248 to 261 (HALLEPTVLPERRL) lie on the Cytoplasmic side of the membrane. Residues 262 to 283 (WPKYLVVGWAFPMLFVIPWIFV) traverse the membrane as a helical segment. Over 284-301 (RASLENTGCWAVNENKKI) the chain is Extracellular. A helical membrane pass occupies residues 302 to 324 (WWIIRGPILLCVTVNFFIFLKIL). Residues 325 to 348 (KLLISKFRAHQMCFRDYKYRLAKS) lie on the Cytoplasmic side of the membrane. The chain crosses the membrane as a helical span at residues 349-367 (TLLLILLMGVHEFLFTFFT). The Extracellular portion of the chain corresponds to 368-379 (DDQVQGFSRLIR). A helical membrane pass occupies residues 380-400 (LFIQLTLSSFHGFLVALQYGF). Over 401-512 (ASREVKAELR…MEEILEESEI (112 aa)) the chain is Cytoplasmic. Residues 458–494 (SGVSSHLTAGNLRDHGAQPHRGRGAWPRASSLSESSE) form a disordered region.

This sequence belongs to the G-protein coupled receptor 2 family.

The protein resides in the cell membrane. Functionally, this is a receptor for glucagon-like peptide 2. The activity of this receptor is mediated by G proteins which activate adenylyl cyclase. This chain is Glucagon-like peptide 2 receptor (Glp2r), found in Mus musculus (Mouse).